The chain runs to 597 residues: NADPH-dependent diflavin oxidoreductase 1 (597 aa).

The Flavodoxin-like domain occupies 6–150; it reads LLVLFGSQTG…AIDPWLQDLW (145 aa). FMN-binding positions include 12–17, 59–62, 97–106, and aspartate 132; these read SQTGTA, ATTG, and LGDSSYAKFN. The 241-residue stretch at 206–446 folds into the FAD-binding FR-type domain; it reads LQPFLAPMVS…WVRSGGLTFP (241 aa). Residues arginine 350, 382-385, and 416-419 each bind FAD; these read RAFS and GLCS. NADP(+) is bound by residues threonine 460, 515–516, 521–525, and aspartate 558; these read SR and KVYVQ. Tryptophan 596 contacts FAD.

Belongs to the NADPH-dependent diflavin oxidoreductase NDOR1 family. The protein in the N-terminal section; belongs to the flavodoxin family. This sequence in the C-terminal section; belongs to the flavoprotein pyridine nucleotide cytochrome reductase family. Interacts with CIAPIN1; as part of the cytosolic iron-sulfur (Fe-S) protein assembly (CIA) machinery. Interacts with DCPS. It depends on FAD as a cofactor. FMN serves as cofactor.

It is found in the cytoplasm. It localises to the perinuclear region. It catalyses the reaction 2 oxidized [2Fe-2S]-[protein] + NADPH = 2 reduced [2Fe-2S]-[protein] + NADP(+) + H(+). In terms of biological role, NADPH-dependent reductase which is a central component of the cytosolic iron-sulfur (Fe-S) protein assembly (CIA) machinery. Transfers electrons from NADPH via its FAD and FMN prosthetic groups to the [2Fe-2S] cluster of CIAPIN1, another key component of the CIA machinery. In turn, this reduced cluster provides electrons for assembly of cytosolic iron-sulfur cluster proteins. It can also reduce the [2Fe-2S] cluster of CISD1 and activate this protein implicated in Fe/S cluster repair. In vitro can fully activate methionine synthase/MTR in the presence of soluble cytochrome b5/CYB5A. The sequence is that of NADPH-dependent diflavin oxidoreductase 1 from Bos taurus (Bovine).